The following is a 114-amino-acid chain: Probable gas vesicle protein J2 (114 aa).

Residues 1-10 (MTDLDHRYPG) are compositionally biased toward basic and acidic residues. The tract at residues 1–21 (MTDLDHRYPGEETEPYGPPSG) is disordered.

The protein belongs to the gas vesicle GvpA family. In terms of assembly, interacts with GvpA.

Its subcellular location is the gas vesicle. In terms of biological role, a minor component of the gas vesicle, might be involved in nucleating gas vesicle formation. Gas vesicles (GV) are hollow, gas filled proteinaceous nanostructures. It is not clear what function GVs perform in soil bacteria. The protein is Probable gas vesicle protein J2 of Streptomyces coelicolor (strain ATCC BAA-471 / A3(2) / M145).